The following is a 260-amino-acid chain: Hydroxyethylthiazole kinase 1 (260 aa).

Position 39 (Met-39) interacts with substrate. ATP is bound by residues Arg-115 and Thr-160. Gly-187 serves as a coordination point for substrate.

This sequence belongs to the Thz kinase family. It depends on Mg(2+) as a cofactor.

The catalysed reaction is 5-(2-hydroxyethyl)-4-methylthiazole + ATP = 4-methyl-5-(2-phosphooxyethyl)-thiazole + ADP + H(+). Its pathway is cofactor biosynthesis; thiamine diphosphate biosynthesis; 4-methyl-5-(2-phosphoethyl)-thiazole from 5-(2-hydroxyethyl)-4-methylthiazole: step 1/1. In terms of biological role, catalyzes the phosphorylation of the hydroxyl group of 4-methyl-5-beta-hydroxyethylthiazole (THZ). This Streptococcus pneumoniae (strain JJA) protein is Hydroxyethylthiazole kinase 1.